Consider the following 107-residue polypeptide: UPF0060 membrane protein Sala_0701 (107 aa).

The next 4 helical transmembrane spans lie at 4–24, 30–50, 60–80, and 87–107; these read FAYI…WAWL, VWWV…LTLV, AAYG…VEGA, and LIGA…PRGG.

It belongs to the UPF0060 family.

The protein resides in the cell inner membrane. This Sphingopyxis alaskensis (strain DSM 13593 / LMG 18877 / RB2256) (Sphingomonas alaskensis) protein is UPF0060 membrane protein Sala_0701.